We begin with the raw amino-acid sequence, 243 residues long: tRNA1(Val) (adenine(37)-N6)-methyltransferase (243 aa).

Belongs to the methyltransferase superfamily. tRNA (adenine-N(6)-)-methyltransferase family.

The protein resides in the cytoplasm. It carries out the reaction adenosine(37) in tRNA1(Val) + S-adenosyl-L-methionine = N(6)-methyladenosine(37) in tRNA1(Val) + S-adenosyl-L-homocysteine + H(+). Functionally, specifically methylates the adenine in position 37 of tRNA(1)(Val) (anticodon cmo5UAC). The chain is tRNA1(Val) (adenine(37)-N6)-methyltransferase from Shewanella loihica (strain ATCC BAA-1088 / PV-4).